The chain runs to 88 residues: Small ribosomal subunit protein uS17 (88 aa).

Belongs to the universal ribosomal protein uS17 family. Part of the 30S ribosomal subunit.

One of the primary rRNA binding proteins, it binds specifically to the 5'-end of 16S ribosomal RNA. In Lactobacillus gasseri (strain ATCC 33323 / DSM 20243 / BCRC 14619 / CIP 102991 / JCM 1131 / KCTC 3163 / NCIMB 11718 / NCTC 13722 / AM63), this protein is Small ribosomal subunit protein uS17.